The sequence spans 432 residues: Glycerophosphocholine acyltransferase 1 (432 aa).

Topologically, residues 1–110 are cytoplasmic; it reads MYKLDNNDID…DSIFFKNSSR (110 aa). Residue serine 78 is modified to Phosphoserine. The chain crosses the membrane as a helical span at residues 111 to 131; that stretch reads LEKAFYPFTLFNIFFIGFLMG. Arginine 132 is a topological domain (lumenal). Residues 133-153 traverse the membrane as a helical segment; sequence FPEWFHVYYTILFFVLMPIRF. Residues 154 to 162 are Cytoplasmic-facing; the sequence is YTYYKTKNH. The helical transmembrane segment at 163–183 threads the bilayer; it reads YFLADFCYFVNMLCLLFIWIF. Residues 184–187 are Lumenal-facing; the sequence is PYSY. A helical membrane pass occupies residues 188-208; it reads SLFQSCFAFTFGTLCFAVITW. The Cytoplasmic portion of the chain corresponds to 209–221; the sequence is RNSLVIHSIDKTT. The helical transmembrane segment at 222–242 threads the bilayer; sequence SCFIHIIPPCVMYVIYHGLPL. The Lumenal segment spans residues 243-263; the sequence is EYKIERFPGAIIQSELDIKKN. The chain crosses the membrane as a helical span at residues 264 to 284; the sequence is ILWTSLYYLVWQSLYHYFITL. The Cytoplasmic portion of the chain corresponds to 285 to 318; the sequence is KKSSKIKSGERMTSFEYLTTHQFKNFWAVKLRSP. A helical membrane pass occupies residues 319 to 339; sequence WPMIIYTLSQYFYQLFTMLLC. Over 340–346 the chain is Lumenal; it reads GIWIRYK. The chain crosses the membrane as a helical span at residues 347 to 369; it reads LAAALFLTIVFLWASHNGATYYI. Topologically, residues 370–432 are cytoplasmic; that stretch reads DHYGKNFEKE…DSSSVSSKSD (63 aa). The interval 413-432 is disordered; that stretch reads LNVNRDEDFDDSSSVSSKSD.

This sequence belongs to the GPC1 family.

It is found in the membrane. The enzyme catalyses sn-glycerol 3-phosphocholine + an acyl-CoA = a 1-acyl-sn-glycero-3-phosphocholine + CoA. The catalysed reaction is sn-glycero-3-phosphoethanolamine + an acyl-CoA = a monoacyl-sn-glycero-3-phosphoethanolamine + CoA. It carries out the reaction sn-glycero-3-phosphoethanolamine + (9Z)-octadecenoyl-CoA = (9Z-octadecenoyl)-sn-glycero-3-phosphoethanolamine + CoA. It catalyses the reaction sn-glycerol 3-phosphocholine + hexadecanoyl-CoA = hexadecanoyl-sn-glycero-3-phosphocholine + CoA. The enzyme catalyses (9Z,12Z)-octadecadienoyl-CoA + sn-glycerol 3-phosphocholine = (9Z,12Z-octadecadienoyl)-sn-glycero-3-phosphocholine + CoA. The catalysed reaction is (12R)-hydroxy-(9Z)-octadecenoyl-CoA + sn-glycerol 3-phosphocholine = (12R-hydroxy-9Z-octadecenoyl)-sn-glycero-3-phosphocholine + CoA. It carries out the reaction (9Z,12Z,15Z)-octadecatrienoyl-CoA + sn-glycerol 3-phosphocholine = (9Z,12Z,15Z-octadecatrienoyl)-sn-glycero-3-phosphocholine + CoA. It catalyses the reaction sn-glycerol 3-phosphocholine + (9Z)-octadecenoyl-CoA = (9Z-octadecenoyl)-sn-glycero-3-phosphocholine + CoA. The enzyme catalyses 1-(9Z-octadecenoyl)-sn-glycero-3-phosphoethanolamine + sn-glycerol 3-phosphocholine = (9Z-octadecenoyl)-sn-glycero-3-phosphocholine + sn-glycero-3-phosphoethanolamine. The GPCAT activity is sensitive to N-ethylmaleimide, phenanthroline, and divalent cations including Ca(2+), Mg(2+), Mn(2+) and Zn(2+). The activity is also inhibited by glycerol-3-phosphate (G3P). Glycerophosphocholine acyltransferase (GPCAT) that utilizes acyl-CoA to acylate glycero-3-phosphocholine (GPC), forming lysophosphatidylcholine (LPC). Shows broad acyl specificities with a preference for 16:0-CoA, polyunsaturated acyl-CoA, and the hydroxylated ricinoleoyl-CoA. Also catalyzes the acylation of glycero-3-phosphoethanolamine (GPE) with acyl-CoA. In addition to acyl-CoA, GPCAT efficiently utilizes LPC and lysophosphatidylethanolamine (LPE) as acyl donors in the acylation of GPC. Contributes to the maintenance of phosphatidylcholine (PC) homeostasis and might also have specific functions in acyl editing of PC, such as transferring acyl groups modified at the sn-2 position of PC to the sn-1. Involved in postsynthetic PC remodeling that produces more saturated PC species. The polypeptide is Glycerophosphocholine acyltransferase 1 (Saccharomyces cerevisiae (strain ATCC 204508 / S288c) (Baker's yeast)).